The following is a 502-amino-acid chain: MQSTTNNNTNKKNHARSNRSDNLSTVVSNRSAYRSASKSASRSNNLSTPGQSRVISYDDDITSDYNTYTINDYIDDPTTDQNTVNDDEGNIYGGNFFDGFIPTSNLFADNYEIKKLDDVIARTNNIMYGGRIPEDQIISTESNNIFGIKDFRVTNTEDTNDDNSNSQSVNSRTDSDNLSARNTSISNSLLTSGRNSASIRNANPLLVRNATSLGNSERNSPDRPSTQGDSSIRGEADNFSGRNASARNSASNKNSASRSSVSNKNSASRSSASRSSVSRNSESIKSSSRNSESRNLESNKNSTSRNLESNKNSASRNSASRNSTSIKSDSKNSDSRNSQTNKSKNQRGGLSEIKGIPVTDKFIGQNEIPTSSLGTHQYEPNYSLTSPGSIISTSSKLNNEAIRGINNRPIAGKNQVYPDTITDTNDLSSFFANTESNTIDQFGGQTSDKNNSTKSNTKYNKSSRKISEISYGTSKRSHNRSSNTSNLKSETDYDIFTANSEL.

Composition is skewed to low complexity over residues 1–10 (MQSTTNNNTN), 28–47 (SNRSAYRSASKSASRSNNLS), and 155–171 (NTEDTNDDNSNSQSVNS). Disordered stretches follow at residues 1–57 (MQST…VISY), 155–181 (NTEDTNDDNSNSQSVNSRTDSDNLSAR), 212–362 (SLGN…TDKF), and 438–487 (TIDQ…TSNL). The segment covering 212-230 (SLGNSERNSPDRPSTQGDS) has biased composition (polar residues). Low complexity-rich tracts occupy residues 242–290 (RNAS…SSRN) and 309–327 (SNKNSASRNSASRNSTSIK). Residues 339-348 (QTNKSKNQRG) show a composition bias toward polar residues. Low complexity predominate over residues 446–460 (TSDKNNSTKSNTKYN). The segment covering 470–487 (SYGTSKRSHNRSSNTSNL) has biased composition (polar residues).

The protein localises to the virion. This is an uncharacterized protein from Acanthamoeba polyphaga (Amoeba).